We begin with the raw amino-acid sequence, 478 residues long: Abscisate beta-glucosyltransferase (478 aa).

Residue His20 is the Proton acceptor of the active site. His20 lines the an anthocyanidin pocket. Catalysis depends on Asp108, which acts as the Charge relay. UDP-alpha-D-glucose-binding residues include Ala340, Gln342, His357, Trp360, Asn361, Ser362, and Glu365. An an anthocyanidin-binding site is contributed by Ala380. Positions 381 and 382 each coordinate UDP-alpha-D-glucose.

This sequence belongs to the UDP-glycosyltransferase family.

It catalyses the reaction 2-cis-(+)-abscisate + UDP-alpha-D-glucose = beta-D-glucopyranosyl cis-(+)-abscisate + UDP. In terms of biological role, glucosyltransferase involved in the catabolism of abscisic acid (ABA). Adds a glucosyl group at the C-1 position of ABA; (S)-2-trans-abscisate is a better substrate than the natural (+)-S-abscisate or its enantiomer (-)-R-abscisate. No activity with (-)-phaseic acid (PA), methylated-ABA or with other hormones such as jasmonate, zeatin, auxin (IAA) or gibberellin A3 (GA3). The polypeptide is Abscisate beta-glucosyltransferase (AOG) (Phaseolus angularis (Azuki bean)).